The sequence spans 394 residues: N-acetylgalactosamine-6-phosphate deacetylase (394 aa).

Glutamate 137 is a Zn(2+) binding site. 148 to 149 (CH) provides a ligand contact to substrate. Residues histidine 201 and histidine 222 each contribute to the Zn(2+) site. Substrate-binding positions include 225 to 226 (NG), arginine 233, and 254 to 257 (DGQH). Aspartate 280 acts as the Proton donor/acceptor in catalysis. 313–315 (LAG) contributes to the substrate binding site.

It belongs to the metallo-dependent hydrolases superfamily. NagA family.

It localises to the cytoplasm. It carries out the reaction N-acetyl-D-galactosamine 6-phosphate + H2O = D-galactosamine 6-phosphate + acetate. The catalysed reaction is N-acetyl-D-glucosamine 6-phosphate + H2O = D-glucosamine 6-phosphate + acetate. Functionally, involved in the pathway of N-acetyl-D-galactosamine degradation. Catalyzes the conversion of N-acetyl-D-galactosamine 6-phosphate to D-galactosamine 6-phosphate and acetate. It can also catalyze the conversion of N-acetyl-D-glucosamine 6-phosphate. This is N-acetylgalactosamine-6-phosphate deacetylase from Shewanella sp. (strain ANA-3).